Here is a 327-residue protein sequence, read N- to C-terminus: DNA-directed RNA polymerase subunit alpha (327 aa).

The interval 1–233 (MVREKVKVST…NLFIPFLHVE (233 aa)) is alpha N-terminal domain (alpha-NTD). Residues 267-327 (LAFQYIFIDQ…KKILDILEKK (61 aa)) are alpha C-terminal domain (alpha-CTD).

Belongs to the RNA polymerase alpha chain family. In terms of assembly, in plastids the minimal PEP RNA polymerase catalytic core is composed of four subunits: alpha, beta, beta', and beta''. When a (nuclear-encoded) sigma factor is associated with the core the holoenzyme is formed, which can initiate transcription.

It is found in the plastid. The protein localises to the chloroplast. It carries out the reaction RNA(n) + a ribonucleoside 5'-triphosphate = RNA(n+1) + diphosphate. DNA-dependent RNA polymerase catalyzes the transcription of DNA into RNA using the four ribonucleoside triphosphates as substrates. The polypeptide is DNA-directed RNA polymerase subunit alpha (Lepidium virginicum (Virginia pepperweed)).